The sequence spans 368 residues: N-acetylneuraminate epimerase (368 aa).

An N-terminal signal peptide occupies residues 1 to 19 (MNKTITALAIMMASFAANA). Kelch repeat units lie at residues 40 to 84 (TVYI…AFID), 86 to 137 (NLYV…FVHN), 139 to 173 (KAYV…KINA), 174 to 219 (HYFD…VNKG), 222 to 265 (TWLI…VAGG), 287 to 336 (ENYQ…PWNN), and 338 to 367 (LLII…VTVQ). E228 serves as the catalytic Proton acceptor.

The protein belongs to the NanM family. As to quaternary structure, homodimer.

It localises to the periplasm. The enzyme catalyses N-acetyl-alpha-neuraminate = N-acetyl-beta-neuraminate. Functionally, converts alpha-N-acetylneuranimic acid (Neu5Ac) to the beta-anomer, accelerating the equilibrium between the alpha- and beta-anomers. Probably facilitates sialidase-negative bacteria to compete successfully for limited amounts of extracellular Neu5Ac, which is likely taken up in the beta-anomer. In addition, the rapid removal of sialic acid from solution might be advantageous to the bacterium to damp down host responses. This is N-acetylneuraminate epimerase from Escherichia coli O9:H4 (strain HS).